Consider the following 204-residue polypeptide: 3-isopropylmalate dehydratase small subunit (204 aa).

It belongs to the LeuD family. LeuD type 1 subfamily. As to quaternary structure, heterodimer of LeuC and LeuD.

It catalyses the reaction (2R,3S)-3-isopropylmalate = (2S)-2-isopropylmalate. The protein operates within amino-acid biosynthesis; L-leucine biosynthesis; L-leucine from 3-methyl-2-oxobutanoate: step 2/4. Its function is as follows. Catalyzes the isomerization between 2-isopropylmalate and 3-isopropylmalate, via the formation of 2-isopropylmaleate. This chain is 3-isopropylmalate dehydratase small subunit, found in Chloroflexus aggregans (strain MD-66 / DSM 9485).